The following is a 156-amino-acid chain: Ribosome maturation factor RimP (156 aa).

This sequence belongs to the RimP family.

The protein resides in the cytoplasm. Functionally, required for maturation of 30S ribosomal subunits. This chain is Ribosome maturation factor RimP, found in Bacillus cereus (strain B4264).